Here is a 529-residue protein sequence, read N- to C-terminus: Peptide chain release factor 3 (529 aa).

Residues 11-280 (AKRRTFAIIS…GLVEWAPAPM (270 aa)) form the tr-type G domain. GTP contacts are provided by residues 20–27 (SHPDAGKT), 88–92 (DTPGH), and 142–145 (NKLD).

It belongs to the TRAFAC class translation factor GTPase superfamily. Classic translation factor GTPase family. PrfC subfamily.

Its subcellular location is the cytoplasm. Increases the formation of ribosomal termination complexes and stimulates activities of RF-1 and RF-2. It binds guanine nucleotides and has strong preference for UGA stop codons. It may interact directly with the ribosome. The stimulation of RF-1 and RF-2 is significantly reduced by GTP and GDP, but not by GMP. The sequence is that of Peptide chain release factor 3 from Shigella sonnei (strain Ss046).